The primary structure comprises 307 residues: MKVIPLASESLGVRSLALFLKIGKVGILIDPGVALGPKRYALPPAQAEMKALSLAREKIQEYAKKAQIVTISHYHYDHHTPFFEGIYESSSVEKAREIYAGKLLLIKHPTENINNSQKKRAHEFLKNAKEIAKDIKFADSQSFDFGSFTIEFSPPVPHGREGSKLGYVLMVLVDDGKKSVLHASDTQLINDKAVEWIIEKNPDILIAGGPPTYLAHRVGNVKEIGMKNINRIISETNAKIVLDHHIIRDKGYERFFSELDERPLTFAEFLGKESAPLEAYRRELHKLEKGEEVEVPGGIKKFLKGLK.

It belongs to the UPF0282 family.

The sequence is that of UPF0282 protein PH1002 from Pyrococcus horikoshii (strain ATCC 700860 / DSM 12428 / JCM 9974 / NBRC 100139 / OT-3).